The chain runs to 355 residues: Peptide chain release factor 1 (355 aa).

Position 233 is an N5-methylglutamine (Gln-233).

Belongs to the prokaryotic/mitochondrial release factor family. In terms of processing, methylated by PrmC. Methylation increases the termination efficiency of RF1.

The protein resides in the cytoplasm. Peptide chain release factor 1 directs the termination of translation in response to the peptide chain termination codons UAG and UAA. In Bacillus anthracis, this protein is Peptide chain release factor 1.